The sequence spans 353 residues: Methylthioribose-1-phosphate isomerase (353 aa).

Substrate is bound by residues 51–53 (RGA), R94, and Q203. D244 acts as the Proton donor in catalysis. Position 254–255 (254–255 (NK)) interacts with substrate.

Belongs to the eIF-2B alpha/beta/delta subunits family. MtnA subfamily.

It catalyses the reaction 5-(methylsulfanyl)-alpha-D-ribose 1-phosphate = 5-(methylsulfanyl)-D-ribulose 1-phosphate. Its pathway is amino-acid biosynthesis; L-methionine biosynthesis via salvage pathway; L-methionine from S-methyl-5-thio-alpha-D-ribose 1-phosphate: step 1/6. Its function is as follows. Catalyzes the interconversion of methylthioribose-1-phosphate (MTR-1-P) into methylthioribulose-1-phosphate (MTRu-1-P). This chain is Methylthioribose-1-phosphate isomerase, found in Nostoc punctiforme (strain ATCC 29133 / PCC 73102).